The sequence spans 453 residues: Mogroside IIIx synthase (453 aa).

The active-site Proton acceptor is the H21. D122 functions as the Charge relay in the catalytic mechanism. UDP-alpha-D-glucose contacts are provided by S273, Q336, W354, N355, S356, E359, D375, and Q376.

Belongs to the UDP-glycosyltransferase family. As to expression, highly expressed in mature fruits.

It carries out the reaction mogroside IIE + UDP-alpha-D-glucose = mogroside IIIX + UDP + H(+). The enzyme catalyses mogroside III + UDP-alpha-D-glucose = mogroside IV + UDP + H(+). It catalyses the reaction mogroside III + UDP-alpha-D-glucose = siamenoside I + UDP + H(+). The catalysed reaction is mogroside IV + UDP-alpha-D-glucose = mogroside V + UDP + H(+). It functions in the pathway secondary metabolite biosynthesis; terpenoid biosynthesis. In terms of biological role, UDP-glycosyltransferase involved in the biosynthesis of cucurbitacin and mogroside tetracyclic triterpene natural products (e.g. siamenoside I and mogrosides IV, V and VI). Cucurbitacins have cytotoxic properties and exhibit deterrent taste as a defense barrier against herbivores. Mogrosides are nonsugar highly oxygenated compounds used as high-intensity zero-calorie sweeteners; they also possess pharmacological properties such as regulating immunity, lowering blood sugar and lipid levels, protecting the liver, and acting as antioxidants and antitumor agents. Catalyzes the branched glucosylations of mogroside II-E, mogroside III and mogroside IV. This is Mogroside IIIx synthase from Siraitia grosvenorii (Monk's fruit).